We begin with the raw amino-acid sequence, 339 residues long: Trace amine-associated receptor 2 (339 aa).

Residues 1-36 (MTSFEAQQETFDCSEYGNGSCPENERSLGVRAAMYS) are Extracellular-facing. N-linked (GlcNAc...) asparagine glycosylation is present at asparagine 18. Intrachain disulfides connect cysteine 21-cysteine 185 and cysteine 104-cysteine 189. A helical membrane pass occupies residues 37–57 (LMAGAIFITIFGNLVMIISIS). The Cytoplasmic portion of the chain corresponds to 58–67 (YFKQLHTPTN). The chain crosses the membrane as a helical span at residues 68–88 (LLILSMAVTDFLLGFTIMPYS). At 89–106 (MVRSVENCWYFGLTFCKI) the chain is on the extracellular side. A helical transmembrane segment spans residues 107-127 (HYSFDLMLSITSIFHLCSVAI). At 128 to 150 (DRFYAICHPLHYCTKMTIPVVKR) the chain is on the cytoplasmic side. The helical transmembrane segment at 151 to 171 (LLLVCWSVPGAFAFGVVFSEA) threads the bilayer. The Extracellular segment spans residues 172–195 (YADGIEGYDILVACSSSCPVMFNK). The chain crosses the membrane as a helical span at residues 196 to 216 (LWGTTLFVAGFFTPSSMMVGI). At 217 to 251 (YGKIFAVSKKHARVIDNLPENQNNQMRKDKKAAKT) the chain is on the cytoplasmic side. A helical membrane pass occupies residues 252 to 272 (LGIVMGVFLLCWFPCFFTILL). The Extracellular segment spans residues 273–287 (DPFLNFSTPAILFDA). The N-linked (GlcNAc...) asparagine glycan is linked to asparagine 277. Residues 288-310 (LTWFGYFNSTCNPLIYGFFYPWF) traverse the membrane as a helical segment. At 311-339 (RRALRYILLGKIFSSHFHNTNLFTQKETE) the chain is on the cytoplasmic side.

It belongs to the G-protein coupled receptor 1 family.

It localises to the cell membrane. Its function is as follows. Orphan olfactory receptor specific for trace amines. Trace amine compounds are enriched in animal body fluids and act on trace amine-associated receptors (TAARs) to elicit both intraspecific and interspecific innate behaviors. Ligand-binding causes a conformation change that triggers signaling via the G(s)-class of G-proteins which activate adenylate cyclase. May also be required to provide olfactory input into limbic brain areas to regulate emotional behaviors likely via modulation of the dopamine system. This chain is Trace amine-associated receptor 2 (Taar2), found in Rattus norvegicus (Rat).